We begin with the raw amino-acid sequence, 68 residues long: Large ribosomal subunit protein uL30 (68 aa).

It belongs to the universal ribosomal protein uL30 family. Part of the 50S ribosomal subunit.

In Kocuria rhizophila (strain ATCC 9341 / DSM 348 / NBRC 103217 / DC2201), this protein is Large ribosomal subunit protein uL30.